A 379-amino-acid chain; its full sequence is Putative acetyl-CoA C-acetyltransferase VraB (379 aa).

Cys86 functions as the Acyl-thioester intermediate in the catalytic mechanism. His338 acts as the Proton acceptor in catalysis.

Belongs to the thiolase-like superfamily. Thiolase family.

The polypeptide is Putative acetyl-CoA C-acetyltransferase VraB (vraB) (Staphylococcus aureus (strain MSSA476)).